Here is a 504-residue protein sequence, read N- to C-terminus: Plasma protease C1 inhibitor (504 aa).

The signal sequence occupies residues 1–22 (MASKLTPLTLLLLLLAGDRAFS). The interval 23–75 (DSEVTSHSSQDPLVVQEGSRDSVPERDGSRSPIEHTGQSSTWPTTSGSTKISN) is disordered. Residues 24-33 (SEVTSHSSQD) are compositionally biased toward polar residues. The segment covering 40–55 (GSRDSVPERDGSRSPI) has biased composition (basic and acidic residues). The segment covering 58 to 75 (TGQSSTWPTTSGSTKISN) has biased composition (polar residues). N-linked (GlcNAc...) asparagine glycans are attached at residues Asn75, Asn83, Asn107, Asn243, and Asn356. Residues 94 to 132 (AQLPEDSPSQSPVNSSSPPSTASAPPTQAPTEPLCPEPL) form a disordered region. A compositionally biased stretch (low complexity) spans 100 to 125 (SPSQSPVNSSSPPSTASAPPTQAPTE).

The protein belongs to the serpin family. In terms of assembly, interacts with MASP1.

It localises to the secreted. Serine protease inhibitor, which acrs as a regulator of the classical complement pathway. Forms a proteolytically inactive stoichiometric complex with the C1r or C1s proteases. May also regulate blood coagulation, fibrinolysis and the generation of kinins. Very efficient inhibitor of FXIIa. Inhibits chymotrypsin and kallikrein. This Rattus norvegicus (Rat) protein is Plasma protease C1 inhibitor (Serping1).